The chain runs to 215 residues: Octanoyltransferase (215 aa).

A BPL/LPL catalytic domain is found at threonine 31–glutamate 206. Residues arginine 70–histidine 77, serine 137–glycine 139, and glycine 150–alanine 152 each bind substrate. The active-site Acyl-thioester intermediate is the cysteine 168.

This sequence belongs to the LipB family.

The protein resides in the cytoplasm. It carries out the reaction octanoyl-[ACP] + L-lysyl-[protein] = N(6)-octanoyl-L-lysyl-[protein] + holo-[ACP] + H(+). The protein operates within protein modification; protein lipoylation via endogenous pathway; protein N(6)-(lipoyl)lysine from octanoyl-[acyl-carrier-protein]: step 1/2. In terms of biological role, catalyzes the transfer of endogenously produced octanoic acid from octanoyl-acyl-carrier-protein onto the lipoyl domains of lipoate-dependent enzymes. Lipoyl-ACP can also act as a substrate although octanoyl-ACP is likely to be the physiological substrate. In Pseudomonas fluorescens (strain SBW25), this protein is Octanoyltransferase.